Reading from the N-terminus, the 261-residue chain is Probable trans-aconitate 2-methyltransferase (261 aa).

This sequence belongs to the methyltransferase superfamily. Tam family.

The protein resides in the cytoplasm. The enzyme catalyses trans-aconitate + S-adenosyl-L-methionine = (E)-3-(methoxycarbonyl)pent-2-enedioate + S-adenosyl-L-homocysteine. Catalyzes the S-adenosylmethionine monomethyl esterification of trans-aconitate. This Mycobacterium bovis (strain ATCC BAA-935 / AF2122/97) protein is Probable trans-aconitate 2-methyltransferase.